The primary structure comprises 395 residues: F-box protein At5g46170 (395 aa).

Residues 24-72 enclose the F-box domain; sequence IDHFDHLPDSILLLVFNKIGDVKALGRCCVVSRRFHSLVPQVDNVVVRV. The tract at residues 122–158 is disordered; that stretch reads TKRSSSSCGGSGSSSSSLSISGDDDGGEIEQGGVTHH. Residues 125-142 show a composition bias toward low complexity; that stretch reads SSSSCGGSGSSSSSLSIS.

This chain is F-box protein At5g46170, found in Arabidopsis thaliana (Mouse-ear cress).